We begin with the raw amino-acid sequence, 270 residues long: 5'-AMP-activated protein kinase subunit beta-1 (270 aa).

Positions Met-1–Ala-44 are disordered. A lipid anchor (N-myristoyl glycine) is attached at Gly-2. A Phosphothreonine modification is found at Thr-4. Ser-5 and Ser-6 each carry phosphoserine. Residues Ala-9–Ile-36 show a composition bias toward basic and acidic residues. Thr-19 carries the post-translational modification Phosphothreonine. Phosphoserine; by autocatalysis occurs at positions 24 and 25. Phosphoserine occurs at positions 40, 96, and 101. The interval Glu-68–Phe-163 is glycogen-binding domain. The residue at position 108 (Ser-108) is a Phosphoserine; by autocatalysis. Thr-148 is modified (phosphothreonine). Residue Ser-182 is modified to Phosphoserine. N6-succinyllysine is present on Lys-201.

The protein belongs to the 5'-AMP-activated protein kinase beta subunit family. In terms of assembly, AMPK is a heterotrimer of an alpha catalytic subunit (PRKAA1 or PRKAA2), a beta (PRKAB1 or PRKAB2) and a gamma non-catalytic subunits (PRKAG1, PRKAG2 or PRKAG3). Interacts with FNIP1 and FNIP2. Post-translationally, phosphorylated when associated with the catalytic subunit (PRKAA1 or PRKAA2). Phosphorylated by ULK1; leading to negatively regulate AMPK activity and suggesting the existence of a regulatory feedback loop between ULK1 and AMPK.

Functionally, non-catalytic subunit of AMP-activated protein kinase (AMPK), an energy sensor protein kinase that plays a key role in regulating cellular energy metabolism. In response to reduction of intracellular ATP levels, AMPK activates energy-producing pathways and inhibits energy-consuming processes: inhibits protein, carbohydrate and lipid biosynthesis, as well as cell growth and proliferation. AMPK acts via direct phosphorylation of metabolic enzymes, and by longer-term effects via phosphorylation of transcription regulators. Also acts as a regulator of cellular polarity by remodeling the actin cytoskeleton; probably by indirectly activating myosin. Beta non-catalytic subunit acts as a scaffold on which the AMPK complex assembles, via its C-terminus that bridges alpha (PRKAA1 or PRKAA2) and gamma subunits (PRKAG1, PRKAG2 or PRKAG3). The sequence is that of 5'-AMP-activated protein kinase subunit beta-1 (PRKAB1) from Bos taurus (Bovine).